Here is a 151-residue protein sequence, read N- to C-terminus: Probable ubiquitin-conjugating enzyme E2 W-A (151 aa).

One can recognise a UBC core domain in the interval 3-151; sequence SMQKRLQKEL…TKWWYHDDTC (149 aa). Catalysis depends on Cys91, which acts as the Glycyl thioester intermediate.

The protein belongs to the ubiquitin-conjugating enzyme family.

It is found in the nucleus. It carries out the reaction S-ubiquitinyl-[E1 ubiquitin-activating enzyme]-L-cysteine + [E2 ubiquitin-conjugating enzyme]-L-cysteine = [E1 ubiquitin-activating enzyme]-L-cysteine + S-ubiquitinyl-[E2 ubiquitin-conjugating enzyme]-L-cysteine.. The catalysed reaction is S-ubiquitinyl-[E1 ubiquitin-activating enzyme]-L-cysteine + [acceptor protein]-N-terminal-amino acid = [E1 ubiquitin-activating enzyme]-L-cysteine + N-terminal-ubiquitinyl-[acceptor protein].. It participates in protein modification; protein ubiquitination. Accepts ubiquitin from the E1 complex and catalyzes its covalent attachment to other proteins. Catalyzes monoubiquitination. Involved in degradation of misfolded chaperone substrate and DNA repair. This is Probable ubiquitin-conjugating enzyme E2 W-A (ube2wa) from Danio rerio (Zebrafish).